A 551-amino-acid polypeptide reads, in one-letter code: MPPNLTPRSFNRDDGVTEEYINGLPAYPTPPTTLANEEQARPRTFDDFGLEEGLVKSLKGLYGEDGKTTPIETLSFHHFTQPDIASAPIGSQRVLLGAETGSGKTVSYLIPLFHHLKRTDPGPSVTSSFFADSENTLHPRSIILSPTHELTRQSTQFAKILTHNTKLSVHGMSSTVSGGVGEKRGSVDVLLGTVGSLRRMFGMTRSEEEQEKEDYIRGKRIWQDEQEKGMVEGDKVEWVVIDEADVLLGREFYLDTISVLSQVKQANLILCTATLPPFLINLLTTNPFFTKKEPFIHLLSPGLHKLPPKLLTRFIRPSTTGNKHGDVAHQVRLTLAEDAKAAKAEGREGEEPSKIVIFCNSDKQVEQVSGILGTKKIDCLAWTGAGEERLRGRNGSLNDFLQRPHLPGHEPPAPLPSLEPRETKPIFQDKNGTTPNVSQVTRRRVLVTTSLLSRGLDFHPSVSSVFLVQPPRDVLDFVHRAGRAGRAGRPGRVVVFGIDEGGTLGEGAKNNKGGKGQGPLKKDGKTALGDRLKDVLGKREVVGAMGKRVRT.

A mitochondrion-targeting transit peptide spans 1 to 13 (MPPNLTPRSFNRD). Residues 43 to 73 (RTFDDFGLEEGLVKSLKGLYGEDGKTTPIET) carry the Q motif motif. The Helicase ATP-binding domain maps to 85–293 (ASAPIGSQRV…TTNPFFTKKE (209 aa)). 98–105 (AETGSGKT) provides a ligand contact to ATP. The DEAD box motif lies at 242 to 245 (DEAD). One can recognise a Helicase C-terminal domain in the interval 334-551 (TLAEDAKAAK…VGAMGKRVRT (218 aa)). The segment at 504 to 527 (LGEGAKNNKGGKGQGPLKKDGKTA) is disordered.

Belongs to the DEAD box helicase family. MRH4 subfamily.

The protein localises to the mitochondrion. It carries out the reaction ATP + H2O = ADP + phosphate + H(+). ATP-binding RNA helicase involved in mitochondrial RNA metabolism. Required for maintenance of mitochondrial DNA. The sequence is that of ATP-dependent RNA helicase MRH4, mitochondrial (MRH4) from Cryptococcus neoformans var. neoformans serotype D (strain B-3501A) (Filobasidiella neoformans).